We begin with the raw amino-acid sequence, 247 residues long: 2-amino-5-formylamino-6-ribosylaminopyrimidin-4(3H)-one 5'-monophosphate deformylase (247 aa).

Residues Glu41, His43, Asp52, and His121 each coordinate Fe cation.

The protein belongs to the creatininase superfamily. FAPy deformylase family. Homodimer. Fe(2+) is required as a cofactor. Zn(2+) serves as cofactor.

It carries out the reaction 2-amino-5-formylamino-6-(5-phospho-D-ribosylamino)pyrimidin-4(3H)-one + H2O = 2,5-diamino-6-(1-D-ribosylamino)pyrimidin-4(3H)-one 5'-phosphate + formate + H(+). It participates in cofactor biosynthesis; coenzyme F420 biosynthesis. The protein operates within cofactor biosynthesis; riboflavin biosynthesis. Functionally, catalyzes the hydrolysis of the formamide of 2-amino-5-formylamino-6-ribosylamino-4(3H)-pyrimidinone 5'-monophosphate (FAPy) to form 2,5-diamino-6-ribosylamino-4(3H)-pyrimidinone 5'-phosphate (APy). The protein is 2-amino-5-formylamino-6-ribosylaminopyrimidin-4(3H)-one 5'-monophosphate deformylase of Methanothermus fervidus (strain ATCC 43054 / DSM 2088 / JCM 10308 / V24 S).